We begin with the raw amino-acid sequence, 254 residues long: Probable pectate lyase E (254 aa).

Residues 1–17 (MLQSLLLLPLFLTSAFA) form the signal peptide. A glycan (N-linked (GlcNAc...) asparagine) is linked at N175. Residues 228-254 (NNNGKEPKKKSSGPSKACEYNQPLKKC) are disordered.

The protein belongs to the polysaccharide lyase 3 family. It depends on Ca(2+) as a cofactor.

It is found in the secreted. It carries out the reaction Eliminative cleavage of (1-&gt;4)-alpha-D-galacturonan to give oligosaccharides with 4-deoxy-alpha-D-galact-4-enuronosyl groups at their non-reducing ends.. In terms of biological role, pectinolytic enzyme consist of four classes of enzymes: pectin lyase, polygalacturonase, pectin methylesterase and rhamnogalacturonase. Among pectinolytic enzymes, pectin lyase is the most important in depolymerization of pectin, since it cleaves internal glycosidic bonds of highly methylated pectins. Favors pectate, the anion, over pectin, the methyl ester. The protein is Probable pectate lyase E (plyE) of Aspergillus clavatus (strain ATCC 1007 / CBS 513.65 / DSM 816 / NCTC 3887 / NRRL 1 / QM 1276 / 107).